The following is a 317-amino-acid chain: L-lactate dehydrogenase 1 (317 aa).

NAD(+)-binding positions include Val17, Asp38, Lys43, Tyr69, and 83–84; that span reads GA. Gln86 and Arg92 together coordinate substrate. NAD(+) is bound by residues Ser105, 122–124, and Ser147; that span reads ATN. 124-127 serves as a coordination point for substrate; that stretch reads NPVD. 152-155 is a substrate binding site; sequence DSAR. The active-site Proton acceptor is His179. The residue at position 223 (Tyr223) is a Phosphotyrosine. Thr232 serves as a coordination point for substrate.

This sequence belongs to the LDH/MDH superfamily. LDH family. As to quaternary structure, homotetramer.

It is found in the cytoplasm. The enzyme catalyses (S)-lactate + NAD(+) = pyruvate + NADH + H(+). The protein operates within fermentation; pyruvate fermentation to lactate; (S)-lactate from pyruvate: step 1/1. Catalyzes the conversion of lactate to pyruvate (Potential). Appears to be the primary factor that allows S.aureus growth during nitrosative stress in both aerobically and anaerobically cultured cells. The polypeptide is L-lactate dehydrogenase 1 (Staphylococcus aureus (strain MRSA252)).